A 29-amino-acid polypeptide reads, in one-letter code: Trypsin inhibitor 1 (29 aa).

3 disulfides stabilise this stretch: Cys-3/Cys-20, Cys-10/Cys-22, and Cys-16/Cys-28.

It belongs to the protease inhibitor I7 (squash-type serine protease inhibitor) family.

The protein resides in the secreted. Its function is as follows. Inhibits trypsin. The protein is Trypsin inhibitor 1 of Cucurbita maxima (Pumpkin).